A 472-amino-acid polypeptide reads, in one-letter code: H(+)/Cl(-) exchange transporter ClcA (472 aa).

Over 1-32 (MKAETPSFEAHQFVRVRRGDAVRRLIQRDKTP) the chain is Cytoplasmic. Residues 33 to 69 (LAVLFMAAVVGTLAGLVGVAFEKSVNWVQNQRIGALA) form a helical membrane-spanning segment. Over 70 to 76 (QVADHWY) the chain is Periplasmic. The helical transmembrane segment at 77-100 (LVWPLAFILSALLAMVGYFLVRRF) threads the bilayer. A Selectivity filter part_1 motif is present at residues 106 to 110 (GSGIP). Ser-107 serves as a coordination point for chloride. The segment at residues 109–116 (IPEIEGAL) is an intramembrane region (helical). Topologically, residues 117–123 (EELRPVR) are cytoplasmic. Helical transmembrane passes span 124 to 141 (WWRVLPVKFVGGMGTLGA) and 148 to 166 (EGPMVQLGGNIGRMVLDVF). The Selectivity filter part_2 motif lies at 146–150 (GREGP). Over 167 to 176 (RMRSPEARHT) the chain is Cytoplasmic. Intramembrane regions (helical) lie at residues 177 to 189 (LLATGAASGLSAA) and 193 to 201 (PLAGILFII). The Cytoplasmic portion of the chain corresponds to 202-214 (EEMRPQFRYNLIS). A helical membrane pass occupies residues 215-232 (IKAVFTGVIMSSIVFRIF). Topologically, residues 233 to 252 (NGEAAIIEVGKLSNAPVNTL) are periplasmic. A helical membrane pass occupies residues 253-281 (WLYLVLGMLFGCFGPLFNFLVLRTQDLFQ). Residues 282–287 (RIHGGN) lie on the Cytoplasmic side of the membrane. Residues 288–309 (IKKWVLIGGLIGGLCGLLGLMQ) traverse the membrane as a helical segment. The Periplasmic segment spans residues 310–329 (PSAVGGGFNLIPIAAAGNFS). The next 2 helical transmembrane spans lie at 330-349 (VGLLLFIFIARVVTTLICFS) and 355-376 (GIFAPMLALGTLLGTAFGMAAI). The Selectivity filter part_3 signature appears at 355 to 359 (GIFAP). Residues Ile-356 and Phe-357 each coordinate chloride. The Periplasmic portion of the chain corresponds to 377-386 (PLFPAYHLDA). Residues 387–401 (GTFAIAGMGALLAAS) constitute an intramembrane region (helical). The note=Loop between two helices intramembrane region spans 402–404 (VRA). An intramembrane region (helical) is located at residues 405–416 (PLTGIVLVLEMT). An intramembrane region (note=Loop between two helices) is located at residues 417 to 421 (DNYQL). A helical membrane pass occupies residues 422–438 (ILPMIITCLGATLLAQF). Topologically, residues 439 to 472 (LGGKPLYSTILQRTLAKQEAEQAAKAQQAPRENT) are cytoplasmic. Tyr-445 lines the chloride pocket.

Belongs to the chloride channel (TC 2.A.49) family. ClcA subfamily. As to quaternary structure, homodimer.

It is found in the cell inner membrane. It carries out the reaction 2 chloride(in) + H(+)(out) = 2 chloride(out) + H(+)(in). Its function is as follows. Proton-coupled chloride transporter. Functions as antiport system and exchanges two chloride ions for 1 proton. Probably acts as an electrical shunt for an outwardly-directed proton pump that is linked to amino acid decarboxylation, as part of the extreme acid resistance (XAR) response. This is H(+)/Cl(-) exchange transporter ClcA from Klebsiella pneumoniae subsp. pneumoniae (strain ATCC 700721 / MGH 78578).